A 136-amino-acid chain; its full sequence is T-cell receptor alpha chain constant (136 aa).

The Ig-like C1-type domain occupies 19 to 103 (STLCLFTDFD…LTEKSFETDM (85 aa)). A disulfide bridge links Cys-22 with Cys-72. Residues Asn-66, Asn-80, and Asn-109 are each glycosylated (N-linked (GlcNAc...) asparagine). The interval 90–111 (CDATLTEKSFETDMNLNFQNLS) is connecting peptide. Residues 111 to 131 (SVMGLRILLLKVAGFNLLMTL) form a helical membrane-spanning segment. The Cytoplasmic portion of the chain corresponds to 132-136 (RLWSS).

In terms of assembly, alpha-beta TR is a heterodimer composed of an alpha and beta chain; disulfide-linked. The alpha-beta TR is associated with the transmembrane signaling CD3 coreceptor proteins to form the TR-CD3 (TcR or TCR). The assembly of alpha-beta TR heterodimers with CD3 occurs in the endoplasmic reticulum where a single alpha-beta TR heterodimer associates with one CD3D-CD3E heterodimer, one CD3G-CD3E heterodimer and one CD247 homodimer forming a stable octameric structure. CD3D-CD3E and CD3G-CD3E heterodimers preferentially associate with TR alpha and TR beta chains, respectively. The association of the CD247 homodimer is the last step of TcR assembly in the endoplasmic reticulum and is required for transport to the cell surface.

It localises to the cell membrane. Its function is as follows. Constant region of T cell receptor (TR) alpha chain. Alpha-beta T cell receptors are antigen specific receptors which are essential to the immune response and are present on the cell surface of T lymphocytes. Recognize peptide-major histocompatibility (MH) (pMH) complexes that are displayed by antigen presenting cells (APC), a prerequisite for efficient T cell adaptive immunity against pathogens. Binding of alpha-beta TR to pMH complex initiates TR-CD3 clustering on the cell surface and intracellular activation of LCK that phosphorylates the ITAM motifs of CD3G, CD3D, CD3E and CD247 enabling the recruitment of ZAP70. In turn, ZAP70 phosphorylates LAT, which recruits numerous signaling molecules to form the LAT signalosome. The LAT signalosome propagates signal branching to three major signaling pathways, the calcium, the mitogen-activated protein kinase (MAPK) kinase and the nuclear factor NF-kappa-B (NF-kB) pathways, leading to the mobilization of transcription factors that are critical for gene expression and essential for T cell growth and differentiation. The T cell repertoire is generated in the thymus, by V-(D)-J rearrangement. This repertoire is then shaped by intrathymic selection events to generate a peripheral T cell pool of self-MH restricted, non-autoaggressive T cells. Post-thymic interaction of alpha-beta TR with the pMH complexes shapes TR structural and functional avidity. This is T-cell receptor alpha chain constant from Mus musculus (Mouse).